We begin with the raw amino-acid sequence, 368 residues long: Quinolinate synthase (368 aa).

The iminosuccinate site is built by His-46 and Ser-63. Residue Cys-110 coordinates [4Fe-4S] cluster. Residues 141–143 (YVN) and Ser-162 each bind iminosuccinate. A [4Fe-4S] cluster-binding site is contributed by Cys-230. Iminosuccinate contacts are provided by residues 256–258 (HPE) and Thr-273. Cys-320 contacts [4Fe-4S] cluster.

Belongs to the quinolinate synthase family. Type 3 subfamily. Homotrimer. [4Fe-4S] cluster serves as cofactor.

The protein resides in the cytoplasm. It catalyses the reaction iminosuccinate + dihydroxyacetone phosphate = quinolinate + phosphate + 2 H2O + H(+). The protein operates within cofactor biosynthesis; NAD(+) biosynthesis; quinolinate from iminoaspartate: step 1/1. Catalyzes the condensation of iminoaspartate with dihydroxyacetone phosphate to form quinolinate. The chain is Quinolinate synthase from Bacillus subtilis (strain 168).